A 611-amino-acid chain; its full sequence is Threonine--tRNA ligase (611 aa).

Residues 1 to 25 form a disordered region; the sequence is MAGPDRKPVSSAAATTPAPSAPVVL. Positions 9 to 24 are enriched in low complexity; it reads VSSAAATTPAPSAPVV. Positions 209-502 are catalytic; it reads DHRRIGKDLD…MTENYAGDYP (294 aa). 3 residues coordinate Zn(2+): Cys-302, His-353, and His-479.

It belongs to the class-II aminoacyl-tRNA synthetase family. Homodimer. Zn(2+) serves as cofactor.

It is found in the cytoplasm. The enzyme catalyses tRNA(Thr) + L-threonine + ATP = L-threonyl-tRNA(Thr) + AMP + diphosphate + H(+). Functionally, catalyzes the attachment of threonine to tRNA(Thr) in a two-step reaction: L-threonine is first activated by ATP to form Thr-AMP and then transferred to the acceptor end of tRNA(Thr). Also edits incorrectly charged L-seryl-tRNA(Thr). This chain is Threonine--tRNA ligase, found in Parasynechococcus marenigrum (strain WH8102).